Here is a 160-residue protein sequence, read N- to C-terminus: Phosphopantetheine adenylyltransferase (160 aa).

Position 9 (S9) interacts with substrate. ATP contacts are provided by residues S9 to F10 and H17. Positions 41, 73, and 87 each coordinate substrate. ATP is bound by residues G88 to R90, E98, and Y123 to S129.

The protein belongs to the bacterial CoaD family. Homohexamer. Mg(2+) serves as cofactor.

The protein localises to the cytoplasm. The enzyme catalyses (R)-4'-phosphopantetheine + ATP + H(+) = 3'-dephospho-CoA + diphosphate. Its pathway is cofactor biosynthesis; coenzyme A biosynthesis; CoA from (R)-pantothenate: step 4/5. In terms of biological role, reversibly transfers an adenylyl group from ATP to 4'-phosphopantetheine, yielding dephospho-CoA (dPCoA) and pyrophosphate. This chain is Phosphopantetheine adenylyltransferase, found in Roseiflexus castenholzii (strain DSM 13941 / HLO8).